A 625-amino-acid polypeptide reads, in one-letter code: tRNA uridine 5-carboxymethylaminomethyl modification enzyme MnmG (625 aa).

14–19 (GAGHAG) is an FAD binding site. 273-287 (GPRYCPSIEDKIVRF) lines the NAD(+) pocket.

The protein belongs to the MnmG family. In terms of assembly, homodimer. Heterotetramer of two MnmE and two MnmG subunits. It depends on FAD as a cofactor.

It is found in the cytoplasm. In terms of biological role, NAD-binding protein involved in the addition of a carboxymethylaminomethyl (cmnm) group at the wobble position (U34) of certain tRNAs, forming tRNA-cmnm(5)s(2)U34. This chain is tRNA uridine 5-carboxymethylaminomethyl modification enzyme MnmG, found in Clostridium botulinum (strain Hall / ATCC 3502 / NCTC 13319 / Type A).